We begin with the raw amino-acid sequence, 374 residues long: Speckle-type POZ protein A (374 aa).

The MATH domain occupies 31–161 (KFSYMWTINN…DDKLTLFCEV (131 aa)). The interval 71–191 (VNPKGLDEES…PECRLADELG (121 aa)) is required for nuclear localization. In terms of domain architecture, BTB spans 173–297 (QNTMNMVKVP…MCEEALCSNL (125 aa)). A homodimerization region spans residues 297 to 355 (LSVENAAEILILADLHSADQLKTQAVDFINYHASDVMETSGWKSMVVSHPHLVAEAYRS).

It belongs to the Tdpoz family. Homodimer. Part of cullin-RING-based BCR (BTB-CUL3-RBX1) E3 ubiquitin-protein ligase complexes that contain CUL3 and SPOP, plus a target protein.

It localises to the nucleus. The protein localises to the nucleus speckle. Its pathway is protein modification; protein ubiquitination. Functionally, component of a cullin-RING-based BCR (BTB-CUL3-RBX1) E3 ubiquitin-protein ligase complex that mediates the ubiquitination of target proteins, leading most often to their proteasomal degradation. The protein is Speckle-type POZ protein A (spop-a) of Xenopus laevis (African clawed frog).